The following is a 144-amino-acid chain: MIGLIQRVKWAKVEVDNQTVGEISMGLLVLLGVEQGDDQAKADRLLEKVLNYRVFADEQGKMNLNVQQAGGSLLVVSQFTLAADTQKGLRPSFSRGATPALAQALYDYFHQQAALKIHTQTGRFAADMQVSLQNDGPVTFWLQV.

Positions 136–137 (GP) match the Gly-cisPro motif, important for rejection of L-amino acids motif.

Belongs to the DTD family. In terms of assembly, homodimer.

Its subcellular location is the cytoplasm. It catalyses the reaction glycyl-tRNA(Ala) + H2O = tRNA(Ala) + glycine + H(+). The catalysed reaction is a D-aminoacyl-tRNA + H2O = a tRNA + a D-alpha-amino acid + H(+). An aminoacyl-tRNA editing enzyme that deacylates mischarged D-aminoacyl-tRNAs. Also deacylates mischarged glycyl-tRNA(Ala), protecting cells against glycine mischarging by AlaRS. Acts via tRNA-based rather than protein-based catalysis; rejects L-amino acids rather than detecting D-amino acids in the active site. By recycling D-aminoacyl-tRNA to D-amino acids and free tRNA molecules, this enzyme counteracts the toxicity associated with the formation of D-aminoacyl-tRNA entities in vivo and helps enforce protein L-homochirality. This is D-aminoacyl-tRNA deacylase from Glaesserella parasuis serovar 5 (strain SH0165) (Haemophilus parasuis).